A 341-amino-acid chain; its full sequence is Ubiquinone biosynthesis protein COQ4, mitochondrial (341 aa).

The transit peptide at 1–16 (MLSRISSVRIGTQVRQ) directs the protein to the mitochondrion. Zn(2+)-binding residues include His220, Asp221, His224, and Glu236.

It belongs to the COQ4 family. Component of a multi-subunit COQ enzyme complex, composed of at least COQ3, COQ4, COQ5, COQ6, COQ7 and COQ9. Zn(2+) is required as a cofactor.

The protein localises to the mitochondrion inner membrane. It carries out the reaction a 4-hydroxy-3-methoxy-5-(all-trans-polyprenyl)benzoate + H(+) = a 2-methoxy-6-(all-trans-polyprenyl)phenol + CO2. The protein operates within cofactor biosynthesis; ubiquinone biosynthesis. In terms of biological role, lyase that catalyzes the C1-decarboxylation of 4-hydroxy-3-methoxy-5-(all-trans-polyprenyl)benzoic acid into 2-methoxy-6-(all-trans-polyprenyl)phenol during ubiquinone biosynthesis. The sequence is that of Ubiquinone biosynthesis protein COQ4, mitochondrial from Vanderwaltozyma polyspora (strain ATCC 22028 / DSM 70294 / BCRC 21397 / CBS 2163 / NBRC 10782 / NRRL Y-8283 / UCD 57-17) (Kluyveromyces polysporus).